Consider the following 248-residue polypeptide: Cyclin-Q (248 aa).

Met1 is subject to N-acetylmethionine. The segment covering 1–12 (MEAPEGGGGGPA) has biased composition (gly residues). Residues 1–21 (MEAPEGGGGGPAARGPEGQPA) are disordered.

It belongs to the cyclin family. Cyclin-like FAM58 subfamily. Associates with CDK10 to promote its kinase activity. Interacts with SALL1.

Its function is as follows. Activating cyclin for the cyclin-associated kinase CDK10. The polypeptide is Cyclin-Q (Homo sapiens (Human)).